The sequence spans 268 residues: Glutamate racemase (268 aa).

Substrate is bound by residues 10-11 (DS) and 42-43 (YG). Catalysis depends on Cys73, which acts as the Proton donor/acceptor. Residue 74–75 (NT) participates in substrate binding. The active-site Proton donor/acceptor is the Cys184. 185 to 186 (TH) contacts substrate.

The protein belongs to the aspartate/glutamate racemases family.

The catalysed reaction is L-glutamate = D-glutamate. The protein operates within cell wall biogenesis; peptidoglycan biosynthesis. Functionally, provides the (R)-glutamate required for cell wall biosynthesis. This is Glutamate racemase from Limosilactobacillus fermentum (strain NBRC 3956 / LMG 18251) (Lactobacillus fermentum).